Reading from the N-terminus, the 147-residue chain is Myoglobin (147 aa).

Residues 2–141 (ADFDMVLKCW…IIADMEADYK (140 aa)) enclose the Globin domain. His60 serves as a coordination point for nitrite. His60 lines the O2 pocket. His89 is a binding site for heme b.

The protein belongs to the globin family. As to quaternary structure, monomeric.

Its subcellular location is the cytoplasm. The protein localises to the sarcoplasm. The enzyme catalyses Fe(III)-heme b-[protein] + nitric oxide + H2O = Fe(II)-heme b-[protein] + nitrite + 2 H(+). The catalysed reaction is H2O2 + AH2 = A + 2 H2O. Functionally, monomeric heme protein which primary function is to store oxygen and facilitate its diffusion within muscle tissues. Reversibly binds oxygen through a pentacoordinated heme iron and enables its timely and efficient release as needed during periods of heightened demand. Depending on the oxidative conditions of tissues and cells, and in addition to its ability to bind oxygen, it also has a nitrite reductase activity whereby it regulates the production of bioactive nitric oxide. Under stress conditions, like hypoxia and anoxia, it also protects cells against reactive oxygen species thanks to its pseudoperoxidase activity. The sequence is that of Myoglobin (mb) from Notothenia neglecta (Yellowbelly rockcod).